The sequence spans 156 residues: Ribosomal RNA large subunit methyltransferase H (156 aa).

Residues Leu-73, Gly-104, and 123-128 (LSSLTL) each bind S-adenosyl-L-methionine.

It belongs to the RNA methyltransferase RlmH family. As to quaternary structure, homodimer.

The protein localises to the cytoplasm. The catalysed reaction is pseudouridine(1915) in 23S rRNA + S-adenosyl-L-methionine = N(3)-methylpseudouridine(1915) in 23S rRNA + S-adenosyl-L-homocysteine + H(+). Functionally, specifically methylates the pseudouridine at position 1915 (m3Psi1915) in 23S rRNA. The protein is Ribosomal RNA large subunit methyltransferase H of Bordetella petrii (strain ATCC BAA-461 / DSM 12804 / CCUG 43448).